Here is a 210-residue protein sequence, read N- to C-terminus: ATP-dependent Clp protease proteolytic subunit (210 aa).

Residue serine 106 is the Nucleophile of the active site. Histidine 131 is an active-site residue.

The protein belongs to the peptidase S14 family. Fourteen ClpP subunits assemble into 2 heptameric rings which stack back to back to give a disk-like structure with a central cavity, resembling the structure of eukaryotic proteasomes.

The protein localises to the cytoplasm. It catalyses the reaction Hydrolysis of proteins to small peptides in the presence of ATP and magnesium. alpha-casein is the usual test substrate. In the absence of ATP, only oligopeptides shorter than five residues are hydrolyzed (such as succinyl-Leu-Tyr-|-NHMec, and Leu-Tyr-Leu-|-Tyr-Trp, in which cleavage of the -Tyr-|-Leu- and -Tyr-|-Trp bonds also occurs).. In terms of biological role, cleaves peptides in various proteins in a process that requires ATP hydrolysis. Has a chymotrypsin-like activity. Plays a major role in the degradation of misfolded proteins. This is ATP-dependent Clp protease proteolytic subunit from Bartonella quintana (strain Toulouse) (Rochalimaea quintana).